The chain runs to 183 residues: Guanylate kinase (183 aa).

A Guanylate kinase-like domain is found at 4 to 182 (GRVVVLTGPS…AITALEAAIF (179 aa)). 11-18 (GPSGVGKG) is an ATP binding site.

This sequence belongs to the guanylate kinase family.

It localises to the cytoplasm. It catalyses the reaction GMP + ATP = GDP + ADP. The catalysed reaction is dZMP + ATP = dZDP + ADP. It functions in the pathway purine metabolism. In terms of biological role, essential for recycling GMP and indirectly, cGMP. Functionally, (Microbial infection) Catalyzes the phosphorylation of dZMP to dZDP, when the bacterium is infected by a phage that produces the substrate for the synthesis of dZTP (2- amino-2'-deoxyadenosine 5'-triphosphate), which is then used by the phage as a DNA polymerase substrate. This chain is Guanylate kinase, found in Synechococcus elongatus (strain ATCC 33912 / PCC 7942 / FACHB-805) (Anacystis nidulans R2).